The sequence spans 227 residues: Endolytic peptidoglycan transglycosylase RlpA (227 aa).

The N-terminal stretch at 1–21 (MMNHKFVLLILLIFYCFFLSG) is a signal peptide. C22 is lipidated: N-palmitoyl cysteine. The S-diacylglycerol cysteine moiety is linked to residue C22.

This sequence belongs to the RlpA family.

It is found in the cell membrane. In terms of biological role, lytic transglycosylase with a strong preference for naked glycan strands that lack stem peptides. In Rickettsia bellii (strain RML369-C), this protein is Endolytic peptidoglycan transglycosylase RlpA.